Here is a 70-residue protein sequence, read N- to C-terminus: MKPGIHPTYAEITATCTCGNIIKVNSTAGKSLHLDVCGACHPFYTGTQKVVDTGGRIDKFNKRFGILGKK.

Cys16, Cys18, Cys37, and Cys40 together coordinate Zn(2+).

This sequence belongs to the bacterial ribosomal protein bL31 family. Type A subfamily. As to quaternary structure, part of the 50S ribosomal subunit. The cofactor is Zn(2+).

In terms of biological role, binds the 23S rRNA. This is Large ribosomal subunit protein bL31 from Shewanella denitrificans (strain OS217 / ATCC BAA-1090 / DSM 15013).